A 114-amino-acid polypeptide reads, in one-letter code: Ribonuclease P protein component (114 aa).

It belongs to the RnpA family. Consists of a catalytic RNA component (M1 or rnpB) and a protein subunit.

The catalysed reaction is Endonucleolytic cleavage of RNA, removing 5'-extranucleotides from tRNA precursor.. Functionally, RNaseP catalyzes the removal of the 5'-leader sequence from pre-tRNA to produce the mature 5'-terminus. It can also cleave other RNA substrates such as 4.5S RNA. The protein component plays an auxiliary but essential role in vivo by binding to the 5'-leader sequence and broadening the substrate specificity of the ribozyme. The sequence is that of Ribonuclease P protein component from Clostridioides difficile (strain 630) (Peptoclostridium difficile).